Consider the following 164-residue polypeptide: SsrA-binding protein (164 aa).

The segment at 141–164 (KLHDKRQDEKQKSIKKEINSALKR) is disordered. The segment covering 145–158 (KRQDEKQKSIKKEI) has biased composition (basic and acidic residues).

This sequence belongs to the SmpB family.

It is found in the cytoplasm. In terms of biological role, required for rescue of stalled ribosomes mediated by trans-translation. Binds to transfer-messenger RNA (tmRNA), required for stable association of tmRNA with ribosomes. tmRNA and SmpB together mimic tRNA shape, replacing the anticodon stem-loop with SmpB. tmRNA is encoded by the ssrA gene; the 2 termini fold to resemble tRNA(Ala) and it encodes a 'tag peptide', a short internal open reading frame. During trans-translation Ala-aminoacylated tmRNA acts like a tRNA, entering the A-site of stalled ribosomes, displacing the stalled mRNA. The ribosome then switches to translate the ORF on the tmRNA; the nascent peptide is terminated with the 'tag peptide' encoded by the tmRNA and targeted for degradation. The ribosome is freed to recommence translation, which seems to be the essential function of trans-translation. This Prochlorococcus marinus (strain AS9601) protein is SsrA-binding protein.